The sequence spans 120 residues: Large ribosomal subunit protein bL17 (120 aa).

It belongs to the bacterial ribosomal protein bL17 family. In terms of assembly, part of the 50S ribosomal subunit. Contacts protein L32.

This Mycoplasmopsis pulmonis (strain UAB CTIP) (Mycoplasma pulmonis) protein is Large ribosomal subunit protein bL17.